Here is a 504-residue protein sequence, read N- to C-terminus: GTPase Der (504 aa).

The EngA-type G 1 domain occupies 4 to 168; sequence PVVALVGRPN…QVLAPFAEKM (165 aa). GTP contacts are provided by residues 10–17, 57–61, and 120–123; these read GRPNVGKS, DTGGI, and NKTD. The segment covering 168-179 has biased composition (basic and acidic residues); that stretch reads MENADENDRTSE. Positions 168 to 191 are disordered; sequence MENADENDRTSEEEQDEWEQEFDF. A compositionally biased stretch (acidic residues) spans 180-191; sequence EEQDEWEQEFDF. Residues 216 to 389 enclose the EngA-type G 2 domain; sequence IKIAIVGRPN…SIKEAYACAT (174 aa). GTP is bound by residues 222 to 229, 269 to 273, and 334 to 337; these read GRPNVGKS, DTAGV, and NKWD. In terms of domain architecture, KH-like spans 390-474; sequence QKMTTSLLTR…PIRLLFQEGS (85 aa).

It belongs to the TRAFAC class TrmE-Era-EngA-EngB-Septin-like GTPase superfamily. EngA (Der) GTPase family. Associates with the 50S ribosomal subunit.

Functionally, GTPase that plays an essential role in the late steps of ribosome biogenesis. This Haemophilus influenzae (strain ATCC 51907 / DSM 11121 / KW20 / Rd) protein is GTPase Der.